Consider the following 352-residue polypeptide: S-adenosylmethionine:tRNA ribosyltransferase-isomerase (352 aa).

Belongs to the QueA family. As to quaternary structure, monomer.

Its subcellular location is the cytoplasm. The catalysed reaction is 7-aminomethyl-7-carbaguanosine(34) in tRNA + S-adenosyl-L-methionine = epoxyqueuosine(34) in tRNA + adenine + L-methionine + 2 H(+). Its pathway is tRNA modification; tRNA-queuosine biosynthesis. In terms of biological role, transfers and isomerizes the ribose moiety from AdoMet to the 7-aminomethyl group of 7-deazaguanine (preQ1-tRNA) to give epoxyqueuosine (oQ-tRNA). The protein is S-adenosylmethionine:tRNA ribosyltransferase-isomerase of Cupriavidus necator (strain ATCC 17699 / DSM 428 / KCTC 22496 / NCIMB 10442 / H16 / Stanier 337) (Ralstonia eutropha).